The chain runs to 237 residues: Segregation and condensation protein A (237 aa).

The protein belongs to the ScpA family. In terms of assembly, component of a cohesin-like complex composed of ScpA, ScpB and the Smc homodimer, in which ScpA and ScpB bind to the head domain of Smc. The presence of the three proteins is required for the association of the complex with DNA.

The protein resides in the cytoplasm. Participates in chromosomal partition during cell division. May act via the formation of a condensin-like complex containing Smc and ScpB that pull DNA away from mid-cell into both cell halves. The sequence is that of Segregation and condensation protein A from Streptococcus thermophilus (strain ATCC BAA-250 / LMG 18311).